A 356-amino-acid polypeptide reads, in one-letter code: Dihydroorotate dehydrogenase (quinone) (356 aa).

FMN-binding positions include 66-70 and Thr-90; that span reads AGFDK. Lys-70 provides a ligand contact to substrate. Residue 115 to 119 participates in substrate binding; the sequence is NRMGF. Asn-143 and Asn-176 together coordinate FMN. Asn-176 lines the substrate pocket. Ser-179 functions as the Nucleophile in the catalytic mechanism. Residue Asn-181 coordinates substrate. 2 residues coordinate FMN: Lys-212 and Thr-240. 241 to 242 serves as a coordination point for substrate; it reads NT. Residues Gly-266, Gly-295, and 316-317 contribute to the FMN site; that span reads YT.

This sequence belongs to the dihydroorotate dehydrogenase family. Type 2 subfamily. As to quaternary structure, monomer. The cofactor is FMN.

It localises to the cell membrane. It catalyses the reaction (S)-dihydroorotate + a quinone = orotate + a quinol. Its pathway is pyrimidine metabolism; UMP biosynthesis via de novo pathway; orotate from (S)-dihydroorotate (quinone route): step 1/1. Catalyzes the conversion of dihydroorotate to orotate with quinone as electron acceptor. This chain is Dihydroorotate dehydrogenase (quinone), found in Rhodococcus erythropolis (strain PR4 / NBRC 100887).